A 665-amino-acid polypeptide reads, in one-letter code: MVSELLLELFSEEIPAFMQKNAEEGYLKIFTKIFEENEIFAKVQVFAGPRRITLHATHVPKVILPKEEEIKGPSIEAPEIAINGFCKAHNVSKLDLSTKLRNNKLYYFFVKKTKERETKEILPKIIIDAINKYSWTKSMFWGCYKIKWIRPLRNILCIFDGEILPLRFGHLSTNNITYGHRLTNNKKLEIIDFENYRNKLLENNVILERLKREEIIKVGLLELANAQNLNIKQDVCLIEEVTGLSEFPIVLLGKIPQKFLELPEEVIVSVMRTHQKYFCLFDKNGSFAPYFLFVINGRFVNTELIIQGNEKVLSARLADALYFYKNDIAKTLESRLDKLKSVIFHTKLGSLKEKVDRITDICRYIAPDNIDLIMAAKLCKSDLVSDMVGEFPDLQGIMGYYYAKHEELNEEVAKAIRDHYKPQGLNDNVPSGNATLLALADKLDSLVGLIIVGETPNGSGDPYALRRQALGIIRIIIENKLEINFINLISFSVSLYKVSSNSHLDSVISFFEERAKFYFKNDYDITLINAVLDLNLVDTKFKLDTLKEFLVQDVGKQLLNAYKRVSNIMGNQKITGLVDASLFSTQYEKELFEVIQKISQQIIVIIANKDYQKALNLLSSLLKPITSFFDNVLVNDSDPKIAQNRLSLLQNTCEVFDKVAKFCRL.

Belongs to the class-II aminoacyl-tRNA synthetase family. As to quaternary structure, tetramer of two alpha and two beta subunits.

It localises to the cytoplasm. The enzyme catalyses tRNA(Gly) + glycine + ATP = glycyl-tRNA(Gly) + AMP + diphosphate. This is Glycine--tRNA ligase beta subunit (glyS) from Rickettsia prowazekii (strain Madrid E).